The sequence spans 432 residues: 3-phosphoshikimate 1-carboxyvinyltransferase (432 aa).

3 residues coordinate 3-phosphoshikimate: Lys23, Ser24, and Arg28. Lys23 is a phosphoenolpyruvate binding site. Phosphoenolpyruvate-binding residues include Gly95 and Arg123. Residues Ser167, Gln169, Asp316, and Lys343 each coordinate 3-phosphoshikimate. Residue Gln169 participates in phosphoenolpyruvate binding. Asp316 functions as the Proton acceptor in the catalytic mechanism. Phosphoenolpyruvate contacts are provided by Arg347 and Arg391.

The protein belongs to the EPSP synthase family. In terms of assembly, monomer.

The protein resides in the cytoplasm. The catalysed reaction is 3-phosphoshikimate + phosphoenolpyruvate = 5-O-(1-carboxyvinyl)-3-phosphoshikimate + phosphate. Its pathway is metabolic intermediate biosynthesis; chorismate biosynthesis; chorismate from D-erythrose 4-phosphate and phosphoenolpyruvate: step 6/7. Functionally, catalyzes the transfer of the enolpyruvyl moiety of phosphoenolpyruvate (PEP) to the 5-hydroxyl of shikimate-3-phosphate (S3P) to produce enolpyruvyl shikimate-3-phosphate and inorganic phosphate. The protein is 3-phosphoshikimate 1-carboxyvinyltransferase of Limosilactobacillus fermentum (strain NBRC 3956 / LMG 18251) (Lactobacillus fermentum).